The primary structure comprises 272 residues: Testis-specific gene 13 protein (272 aa).

The chain is Testis-specific gene 13 protein (TSGA13) from Bos taurus (Bovine).